A 210-amino-acid polypeptide reads, in one-letter code: Small ribosomal subunit protein uS3 (210 aa).

Residues 39-107 (IREKLMEKLK…EILLDIQEVK (69 aa)) form the KH type-2 domain.

The protein belongs to the universal ribosomal protein uS3 family. As to quaternary structure, part of the 30S ribosomal subunit. Forms a tight complex with proteins S10 and S14.

Functionally, binds the lower part of the 30S subunit head. Binds mRNA in the 70S ribosome, positioning it for translation. The sequence is that of Small ribosomal subunit protein uS3 from Opitutus terrae (strain DSM 11246 / JCM 15787 / PB90-1).